The primary structure comprises 120 residues: Ribonuclease P protein component (120 aa).

The protein belongs to the RnpA family. Consists of a catalytic RNA component (M1 or rnpB) and a protein subunit.

The enzyme catalyses Endonucleolytic cleavage of RNA, removing 5'-extranucleotides from tRNA precursor.. Its function is as follows. RNaseP catalyzes the removal of the 5'-leader sequence from pre-tRNA to produce the mature 5'-terminus. It can also cleave other RNA substrates such as 4.5S RNA. The protein component plays an auxiliary but essential role in vivo by binding to the 5'-leader sequence and broadening the substrate specificity of the ribozyme. The protein is Ribonuclease P protein component of Thioalkalivibrio sulfidiphilus (strain HL-EbGR7).